The sequence spans 427 residues: Lupus La protein homolog B (427 aa).

The 93-residue stretch at 6–98 (DKEQLDLDTK…RRSPAKPLPE (93 aa)) folds into the HTH La-type RNA-binding domain. Residues 110 to 202 (RSVYIKGFPT…EERKLNKSEE (93 aa)) enclose the RRM domain. Disordered regions lie at residues 193–220 (EERKLNKSEEKAKSKQEKEEAQKQAEDA) and 319–427 (EGKQ…VGDQ). A xRRM domain is found at 226–348 (EERVGCLLKF…KGRGGKGNDS (123 aa)). Positions 315-331 (KKIMEGKQESFNKRKGR) match the Nuclear localization signal motif. Basic residues-rich tracts occupy residues 327–342 (KRKGRDGRKFKGKGRG) and 351–360 (RKKIQFQGKK). A compositionally biased stretch (acidic residues) spans 365–376 (SSDDEDDMEESE). Residues 405 to 427 (RALDDKAEDGPAVKQSKTEVGDQ) are compositionally biased toward basic and acidic residues.

Phosphorylated.

It is found in the nucleus. La protein plays a role in the transcription of RNA polymerase III. It is most probably a transcription termination factor. Binds to the 3' termini of virtually all nascent polymerase III transcripts. This chain is Lupus La protein homolog B (ssb-b), found in Xenopus laevis (African clawed frog).